Reading from the N-terminus, the 482-residue chain is Alanine aminotransferase 2 (482 aa).

At Lys-299 the chain carries N6-(pyridoxal phosphate)lysine.

It belongs to the class-I pyridoxal-phosphate-dependent aminotransferase family. Alanine aminotransferase subfamily. In terms of assembly, homodimer. It depends on pyridoxal 5'-phosphate as a cofactor. Post-translationally, the N-terminus is blocked. In terms of tissue distribution, mesophyll and bundle sheath cells.

It catalyses the reaction L-alanine + 2-oxoglutarate = pyruvate + L-glutamate. Its pathway is photosynthesis; C4 acid pathway. It functions in the pathway amino-acid degradation; L-alanine degradation via transaminase pathway; pyruvate from L-alanine: step 1/1. Its function is as follows. Transfer of C3 units between the cytosol of mesophyll and bundle sheath cells to maintain a nitrogen-carbon balance in the C4-dicarboxylic pathway. This chain is Alanine aminotransferase 2, found in Panicum miliaceum (Proso millet).